We begin with the raw amino-acid sequence, 429 residues long: Adenylosuccinate synthetase (429 aa).

GTP contacts are provided by residues 12–18 (GDEGKGK) and 40–42 (GHT). Catalysis depends on D13, which acts as the Proton acceptor. Residues D13 and G40 each coordinate Mg(2+). Residues 13-16 (DEGK), 38-41 (NAGH), T128, R142, Q223, T238, and R302 each bind IMP. H41 serves as the catalytic Proton donor. 298-304 (TVTGRPR) contributes to the substrate binding site. Residues R304, 330 to 332 (LLD), and 412 to 414 (SVG) contribute to the GTP site.

It belongs to the adenylosuccinate synthetase family. In terms of assembly, homodimer. It depends on Mg(2+) as a cofactor.

The protein resides in the cytoplasm. It catalyses the reaction IMP + L-aspartate + GTP = N(6)-(1,2-dicarboxyethyl)-AMP + GDP + phosphate + 2 H(+). The protein operates within purine metabolism; AMP biosynthesis via de novo pathway; AMP from IMP: step 1/2. Functionally, plays an important role in the de novo pathway of purine nucleotide biosynthesis. Catalyzes the first committed step in the biosynthesis of AMP from IMP. The chain is Adenylosuccinate synthetase from Limosilactobacillus fermentum (strain NBRC 3956 / LMG 18251) (Lactobacillus fermentum).